A 351-amino-acid polypeptide reads, in one-letter code: Cytoplasmic dynein 2 light intermediate chain 1 (351 aa).

Residues 303 to 335 are disordered; that stretch reads GTLKAVQDPARDPQYAESEVDEMRVQKDQELEH. Residues 323–335 are compositionally biased toward basic and acidic residues; sequence DEMRVQKDQELEH.

This sequence belongs to the dynein light intermediate chain family. Light intermediate chain of the cytoplasmic dynein complex 2, a multisubunit complex composed at least of eleven different proteins. The cytoplasmic dynein 2 complex consists of two catalytic heavy chains (HCs) and a number of non-catalytic subunits presented by intermediate chains (ICs), light intermediate chains (LICs) and light chains (LCs). Among them, a heavy chain (DYNC2H1), two intermediate chains (DYNC2I2 and DYNC2I1), a light intermediate chain (DYNC2LI1), and a light chain (DYNLT2B) are unique to the dynein-2 complex, but a subset of light chains are also shared by dynein-1 and dynein-2 complexes. Dynein-2 complex is built around two copies of cytoplasmic dynein 2 heavy chain 1 (DYNC2H1). The C-terminal region forms the motor domain, which converts the energy from ATP hydrolysis into movement. Its N-terminal region forms the tail, an extended structure that binds the other subunits and holds the two heavy chains in a homodimer. Interacts with DYNC2H1 (via N-terminus); this interaction stabilizes the dynein-2 complex structure. As to expression, specifically expressed by ciliated cells in brain, lung, spleen, testis and kidney (at protein level). Enriched in the ependymal layer lining the lateral ventricles (at protein level).

The protein resides in the cytoplasm. The protein localises to the cell projection. It localises to the cilium. Its subcellular location is the cytoskeleton. It is found in the cilium basal body. The protein resides in the cilium axoneme. The protein localises to the microtubule organizing center. It localises to the centrosome. In terms of biological role, acts as one of several non-catalytic accessory components of the cytoplasmic dynein 2 complex (dynein-2 complex), a motor protein complex that drives the movement of cargos along microtubules within cilia and flagella in concert with the intraflagellar transport (IFT) system, facilitating the assembly of these organelles. Involved in the regulation of ciliary length. The polypeptide is Cytoplasmic dynein 2 light intermediate chain 1 (Dync2li1) (Mus musculus (Mouse)).